The sequence spans 433 residues: Glutamate-1-semialdehyde 2,1-aminomutase (433 aa).

Residue Lys-273 is modified to N6-(pyridoxal phosphate)lysine.

This sequence belongs to the class-III pyridoxal-phosphate-dependent aminotransferase family. HemL subfamily. Homodimer. Pyridoxal 5'-phosphate is required as a cofactor.

The protein localises to the cytoplasm. The enzyme catalyses (S)-4-amino-5-oxopentanoate = 5-aminolevulinate. The protein operates within porphyrin-containing compound metabolism; protoporphyrin-IX biosynthesis; 5-aminolevulinate from L-glutamyl-tRNA(Glu): step 2/2. It participates in porphyrin-containing compound metabolism; chlorophyll biosynthesis. The sequence is that of Glutamate-1-semialdehyde 2,1-aminomutase from Crocosphaera subtropica (strain ATCC 51142 / BH68) (Cyanothece sp. (strain ATCC 51142)).